We begin with the raw amino-acid sequence, 212 residues long: uncharacterized protein (212 aa).

A disordered region spans residues 47-129 (RELLDRRRSQ…GNIDNGQPRR (83 aa)).

This is an uncharacterized protein from Caenorhabditis elegans.